We begin with the raw amino-acid sequence, 723 residues long: Capsid protein (723 aa).

The tract at residues 658–679 (QATPPPFKKPRTEDQEENPEET) is disordered.

It belongs to the anelloviridae capsid protein family.

It localises to the virion. Self assemble to form an icosahedral capsid. This chain is Capsid protein, found in Torque teno virus (isolate Japanese macaque/Japan/Mf-TTV9/2000) (TTV).